A 322-amino-acid polypeptide reads, in one-letter code: Ribonucleoside-diphosphate reductase small subunit (322 aa).

Fe cation contacts are provided by Asp-70, Glu-101, and His-104. Tyr-108 is a catalytic residue. 3 residues coordinate Fe cation: Glu-163, Glu-197, and His-200.

It belongs to the ribonucleoside diphosphate reductase small chain family. As to quaternary structure, heterodimer of a large and a small subunit. The cofactor is Fe cation.

The catalysed reaction is a 2'-deoxyribonucleoside 5'-diphosphate + [thioredoxin]-disulfide + H2O = a ribonucleoside 5'-diphosphate + [thioredoxin]-dithiol. Provides the precursors necessary for DNA synthesis. Catalyzes the biosynthesis of deoxyribonucleotides from the corresponding ribonucleotides. In Plasmodium falciparum (isolate FCR-3 / Gambia), this protein is Ribonucleoside-diphosphate reductase small subunit (RNR2).